The primary structure comprises 101 residues: Urease subunit beta (101 aa).

It belongs to the urease beta subunit family. As to quaternary structure, heterotrimer of UreA (gamma), UreB (beta) and UreC (alpha) subunits. Three heterotrimers associate to form the active enzyme.

The protein localises to the cytoplasm. The enzyme catalyses urea + 2 H2O + H(+) = hydrogencarbonate + 2 NH4(+). Its pathway is nitrogen metabolism; urea degradation; CO(2) and NH(3) from urea (urease route): step 1/1. This Agrobacterium fabrum (strain C58 / ATCC 33970) (Agrobacterium tumefaciens (strain C58)) protein is Urease subunit beta.